Consider the following 257-residue polypeptide: UPF0246 protein BT_3869 (257 aa).

Belongs to the UPF0246 family.

The chain is UPF0246 protein BT_3869 from Bacteroides thetaiotaomicron (strain ATCC 29148 / DSM 2079 / JCM 5827 / CCUG 10774 / NCTC 10582 / VPI-5482 / E50).